We begin with the raw amino-acid sequence, 72 residues long: UPF0270 protein KPN78578_37030 (72 aa).

This sequence belongs to the UPF0270 family.

This chain is UPF0270 protein KPN78578_37030, found in Klebsiella pneumoniae subsp. pneumoniae (strain ATCC 700721 / MGH 78578).